Reading from the N-terminus, the 313-residue chain is Methionyl-tRNA formyltransferase (313 aa).

Residue 110-113 (SLLP) coordinates (6S)-5,6,7,8-tetrahydrofolate.

This sequence belongs to the Fmt family.

It catalyses the reaction L-methionyl-tRNA(fMet) + (6R)-10-formyltetrahydrofolate = N-formyl-L-methionyl-tRNA(fMet) + (6S)-5,6,7,8-tetrahydrofolate + H(+). Functionally, attaches a formyl group to the free amino group of methionyl-tRNA(fMet). The formyl group appears to play a dual role in the initiator identity of N-formylmethionyl-tRNA by promoting its recognition by IF2 and preventing the misappropriation of this tRNA by the elongation apparatus. This Lysinibacillus sphaericus (strain C3-41) protein is Methionyl-tRNA formyltransferase.